We begin with the raw amino-acid sequence, 324 residues long: Short-chain dehydrogenase/reductase iacJ (324 aa).

Residues Ile-42, Lys-66, Asp-93, Asn-120, Tyr-204, Lys-208, and Thr-239 each contribute to the NADP(+) site. The active-site Proton donor is Tyr-204. The active-site Lowers pKa of active site Tyr is Lys-208.

The protein belongs to the short-chain dehydrogenases/reductases (SDR) family.

It participates in secondary metabolite biosynthesis. In terms of biological role, short-chain dehydrogenase/reductase; part of the gene cluster that mediates the biosynthesis of iso-A82775C, a enylepoxycyclohexane and biosynthetic precursor of the chloropestolide anticancer natural products. Within the cluster, the prenyltransferase iacE prenylates siccayne to generate pestalodiol E, using dimethylallyl diphosphate (DMAPP) as cosubstrate. The probable oxidoreductase iacF is then involved in the epoxidation of pestalodiol F to pestalodiol F, which is further converted to pestalofone A by the short-chain dehydrogenase/reductase iacG. Iso-A82775C is subsequently generated from pestalofone A by the short-chain dehydrogenase/reductase iacC. Iso-A82775C is further condensed with maldoxin via a Diels-Alder reaction to produce the anticancer natural products chloropestolides A to E. The protein is Short-chain dehydrogenase/reductase iacJ of Pestalotiopsis fici (strain W106-1 / CGMCC3.15140).